Reading from the N-terminus, the 90-residue chain is Large ribosomal subunit protein bL27 (90 aa).

A disordered region spans residues 1-24 (MAHKKGTGSTRNGRDSNSKRLGVK).

It belongs to the bacterial ribosomal protein bL27 family.

This is Large ribosomal subunit protein bL27 from Prochlorococcus marinus (strain NATL1A).